The primary structure comprises 1093 residues: Isoleucine--tRNA ligase, chloroplastic/mitochondrial (1093 aa).

The interval 69–103 is disordered; sequence PNNEFGHSSKRRSRGPVMAAKKASEGEKQEDGKYK. Residues 90 to 103 are compositionally biased toward basic and acidic residues; sequence KASEGEKQEDGKYK. The 'HIGH' region signature appears at 155–165; the sequence is PYANGDLHMGH. E682 serves as a coordination point for L-isoleucyl-5'-AMP. The 'KMSKS' region signature appears at 723–727; sequence KMSKS. K726 is an ATP binding site. Residues C1050, C1053, C1070, and C1073 each coordinate Zn(2+).

The protein belongs to the class-I aminoacyl-tRNA synthetase family.

The protein resides in the plastid. It is found in the chloroplast. It localises to the mitochondrion. It carries out the reaction tRNA(Ile) + L-isoleucine + ATP = L-isoleucyl-tRNA(Ile) + AMP + diphosphate. This is Isoleucine--tRNA ligase, chloroplastic/mitochondrial from Arabidopsis thaliana (Mouse-ear cress).